The chain runs to 212 residues: 3-demethoxyubiquinol 3-hydroxylase (212 aa).

Fe cation is bound by residues E61, E91, H94, E143, E175, and H178.

This sequence belongs to the COQ7 family. Fe cation is required as a cofactor.

It is found in the cell membrane. It catalyses the reaction a 5-methoxy-2-methyl-3-(all-trans-polyprenyl)benzene-1,4-diol + AH2 + O2 = a 3-demethylubiquinol + A + H2O. It functions in the pathway cofactor biosynthesis; ubiquinone biosynthesis. Functionally, catalyzes the hydroxylation of 2-nonaprenyl-3-methyl-6-methoxy-1,4-benzoquinol during ubiquinone biosynthesis. This is 3-demethoxyubiquinol 3-hydroxylase from Methylibium petroleiphilum (strain ATCC BAA-1232 / LMG 22953 / PM1).